Reading from the N-terminus, the 682-residue chain is Potassium-transporting ATPase ATP-binding subunit (682 aa).

4 consecutive transmembrane segments (helical) span residues 34 to 54 (PVMF…IAMA), 62 to 82 (ALFS…ANFA), 219 to 239 (IALT…TATL), and 254 to 274 (VLVA…LSAI). Aspartate 307 serves as the catalytic 4-aspartylphosphate intermediate. ATP-binding positions include aspartate 344, glutamate 348, 377 to 384 (FTAQSRMS), and lysine 395. Residues aspartate 518 and aspartate 522 each coordinate Mg(2+). 3 consecutive transmembrane segments (helical) span residues 588 to 608 (FAII…LNIM), 616 to 636 (AILS…PLAL), and 656 to 676 (IYGL…DLLL).

Belongs to the cation transport ATPase (P-type) (TC 3.A.3) family. Type IA subfamily. The system is composed of three essential subunits: KdpA, KdpB and KdpC.

It is found in the cell inner membrane. It catalyses the reaction K(+)(out) + ATP + H2O = K(+)(in) + ADP + phosphate + H(+). In terms of biological role, part of the high-affinity ATP-driven potassium transport (or Kdp) system, which catalyzes the hydrolysis of ATP coupled with the electrogenic transport of potassium into the cytoplasm. This subunit is responsible for energy coupling to the transport system and for the release of the potassium ions to the cytoplasm. In Shigella boydii serotype 4 (strain Sb227), this protein is Potassium-transporting ATPase ATP-binding subunit.